Reading from the N-terminus, the 216-residue chain is Thiamine-phosphate synthase (216 aa).

4-amino-2-methyl-5-(diphosphooxymethyl)pyrimidine-binding positions include 41–45 (QLREK) and Asp77. Positions 78 and 97 each coordinate Mg(2+). Ser116 provides a ligand contact to 4-amino-2-methyl-5-(diphosphooxymethyl)pyrimidine. Residue 143–145 (TTS) participates in 2-[(2R,5Z)-2-carboxy-4-methylthiazol-5(2H)-ylidene]ethyl phosphate binding. Lys146 is a 4-amino-2-methyl-5-(diphosphooxymethyl)pyrimidine binding site. 2-[(2R,5Z)-2-carboxy-4-methylthiazol-5(2H)-ylidene]ethyl phosphate-binding positions include Gly174 and 194-195 (IS).

This sequence belongs to the thiamine-phosphate synthase family. The cofactor is Mg(2+).

It carries out the reaction 2-[(2R,5Z)-2-carboxy-4-methylthiazol-5(2H)-ylidene]ethyl phosphate + 4-amino-2-methyl-5-(diphosphooxymethyl)pyrimidine + 2 H(+) = thiamine phosphate + CO2 + diphosphate. The catalysed reaction is 2-(2-carboxy-4-methylthiazol-5-yl)ethyl phosphate + 4-amino-2-methyl-5-(diphosphooxymethyl)pyrimidine + 2 H(+) = thiamine phosphate + CO2 + diphosphate. It catalyses the reaction 4-methyl-5-(2-phosphooxyethyl)-thiazole + 4-amino-2-methyl-5-(diphosphooxymethyl)pyrimidine + H(+) = thiamine phosphate + diphosphate. It functions in the pathway cofactor biosynthesis; thiamine diphosphate biosynthesis; thiamine phosphate from 4-amino-2-methyl-5-diphosphomethylpyrimidine and 4-methyl-5-(2-phosphoethyl)-thiazole: step 1/1. In terms of biological role, condenses 4-methyl-5-(beta-hydroxyethyl)thiazole monophosphate (THZ-P) and 2-methyl-4-amino-5-hydroxymethyl pyrimidine pyrophosphate (HMP-PP) to form thiamine monophosphate (TMP). This is Thiamine-phosphate synthase from Pediococcus pentosaceus (strain ATCC 25745 / CCUG 21536 / LMG 10740 / 183-1w).